The chain runs to 157 residues: Deoxyuridine 5'-triphosphate nucleotidohydrolase (157 aa).

Residues Arg-76–Gly-78, Asn-89, Thr-93–Asp-95, and Lys-103 contribute to the substrate site.

Belongs to the dUTPase family. Mg(2+) serves as cofactor.

It carries out the reaction dUTP + H2O = dUMP + diphosphate + H(+). The protein operates within pyrimidine metabolism; dUMP biosynthesis; dUMP from dCTP (dUTP route): step 2/2. This enzyme is involved in nucleotide metabolism: it produces dUMP, the immediate precursor of thymidine nucleotides and it decreases the intracellular concentration of dUTP so that uracil cannot be incorporated into DNA. In Brucella abortus (strain 2308), this protein is Deoxyuridine 5'-triphosphate nucleotidohydrolase.